A 173-amino-acid polypeptide reads, in one-letter code: MTLEEIKMMIREIPDFPKKGIKFKDITPVLKDAKAFNYSIEMLAKALEGRKFDLIAAPEARGFLFGAPLAYRLGVGFVPVRKPGKLPAETLSYEYELEYGTDSLEIHKDAVLEGQRVVIVDDLLATGGTIYASAKLVESLGGIVDSIIFLTELTFLDGRKKLDGYDIISLIKF.

The protein belongs to the purine/pyrimidine phosphoribosyltransferase family. As to quaternary structure, homodimer.

It localises to the cytoplasm. It catalyses the reaction AMP + diphosphate = 5-phospho-alpha-D-ribose 1-diphosphate + adenine. It participates in purine metabolism; AMP biosynthesis via salvage pathway; AMP from adenine: step 1/1. In terms of biological role, catalyzes a salvage reaction resulting in the formation of AMP, that is energically less costly than de novo synthesis. This is Adenine phosphoribosyltransferase from Thermoanaerobacter pseudethanolicus (strain ATCC 33223 / 39E) (Clostridium thermohydrosulfuricum).